The primary structure comprises 1049 residues: DEAD-box ATP-dependent RNA helicase 42 (1049 aa).

Disordered stretches follow at residues 1–279 and 299–358; these read MGSS…DEID and MPAA…DDEE. The segment covering 64–106 has biased composition (basic and acidic residues); it reads KERDREERKAREREEREKEKERERARRREERDREERSRRREAA. Positions 118–131 are enriched in basic residues; the sequence is RKRRRRSSHHHHHH. Basic and acidic residues-rich tracts occupy residues 161-170 and 181-199; these read KKEEEQKQLD and KEWQEMKRREEETKRREQE. The span at 201–214 shows a compositional bias: low complexity; sequence AGVGTSAAAAAAPA. Residues 229–239 are compositionally biased toward acidic residues; sequence DGEESDEEGNQ. The span at 262–272 shows a compositional bias: low complexity; it reads NGGDNANGANA. Over residues 304-313 the composition is skewed to basic and acidic residues; that stretch reads VDDKNDKSAK. The span at 335–358 shows a compositional bias: acidic residues; it reads EDSDSDYADDEDDEGGSEDEDDEE. The Q motif signature appears at 424 to 452; it reads KTWVQSGLTSKLLDTIKKLGFEKPMSIQA. Residues 455–633 form the Helicase ATP-binding domain; the sequence is LPIIMSGRDC…RKVLTKPVEI (179 aa). Residue 468–475 participates in ATP binding; sequence AKTGSGKT. The DEAD box signature appears at 581 to 584; that stretch reads DEAD. The Helicase C-terminal domain maps to 644–805; the sequence is DITQLVEVRP…AVPEDLKGLA (162 aa). The segment at 816-868 is disordered; it reads TEQAHGTGYGGSGFKFNEEEDEARKSAKKAQAREYGYEEDKSDSDSDEEGGVR. Positions 855 to 864 are enriched in acidic residues; that stretch reads DKSDSDSDEE. Residues 1012-1037 are a coiled coil; the sequence is TELSVKKAKAELKRVLEDCANHALNL.

Belongs to the DEAD box helicase family. DDX46/PRP5 subfamily.

The catalysed reaction is ATP + H2O = ADP + phosphate + H(+). This Oryza sativa subsp. japonica (Rice) protein is DEAD-box ATP-dependent RNA helicase 42.